Reading from the N-terminus, the 761-residue chain is RNA-binding protein 12B (761 aa).

A phosphoserine mark is found at Ser-98, Ser-101, and Ser-112. Residue Lys-114 forms a Glycyl lysine isopeptide (Lys-Gly) (interchain with G-Cter in SUMO2) linkage. A disordered region spans residues 120–147; that stretch reads SGYGSSINQDAGFHSNGTGHGNLRPRKT. Residue Lys-151 forms a Glycyl lysine isopeptide (Lys-Gly) (interchain with G-Cter in SUMO2) linkage. The RRM 1 domain maps to 155 to 230; that stretch reads PYLFLRGLPY…RFIEVMQGSE (76 aa). Residues 247–262 are compositionally biased toward basic and acidic residues; the sequence is LRRSEEHSPPRGINDR. The tract at residues 247 to 278 is disordered; it reads LRRSEEHSPPRGINDRHFRKRSHSKSPRRTRS. Ser-250 and Ser-254 each carry phosphoserine. Over residues 263–278 the composition is skewed to basic residues; sequence HFRKRSHSKSPRRTRS. Thr-276 bears the Phosphothreonine mark. Phosphoserine occurs at positions 278, 280, 292, and 294. The RRM 2 domain maps to 284-360; that stretch reads FYVHLKNLSL…RPVHIDPISR (77 aa). At Lys-319 the chain carries N6-acetyllysine. Residue Lys-335 forms a Glycyl lysine isopeptide (Lys-Gly) (interchain with G-Cter in SUMO2) linkage. Basic and acidic residues predominate over residues 372 to 384; it reads KKRSGSPERDRPG. Residues 372 to 392 are disordered; it reads KKRSGSPERDRPGHVSQKYSQ. Residue Ser-377 is modified to Phosphoserine. The RRM 3 domain maps to 400–477; that stretch reads LCIYIRNFPF…TEVLLRLISE (78 aa). Glycyl lysine isopeptide (Lys-Gly) (interchain with G-Cter in SUMO2) cross-links involve residues Lys-514 and Lys-541. Residues 538-621 show a composition bias toward basic and acidic residues; that stretch reads DNFKHPQRDF…RHPREEDWRR (84 aa). Residues 538 to 690 are disordered; it reads DNFKHPQRDF…THQMKTSGAL (153 aa). Phosphoserine is present on residues Ser-575 and Ser-591. Over residues 627-654 the composition is skewed to polar residues; the sequence is LQSTSGGHPQSISGGHPQSISGARPRST. Over residues 661 to 672 the composition is skewed to low complexity; that stretch reads SISGGRLRSISG.

The sequence is that of RNA-binding protein 12B (RBM12B) from Pongo abelii (Sumatran orangutan).